Reading from the N-terminus, the 914-residue chain is Chitin synthase B (914 aa).

Disordered regions lie at residues 1-67 (MAYQ…TSGY) and 112-140 (YARS…GGGL). Gly residues predominate over residues 130-140 (GGAGSGGGGGL). Helical transmembrane passes span 543-562 (WLNG…GRMY), 586-606 (ILTW…MDLV), 627-647 (IVNT…FILA), 662-682 (SFVV…YLVV), 712-732 (AGII…ASFM), 843-863 (LVTF…SDGV), and 882-902 (ALLW…CWFL).

The protein belongs to the chitin synthase family. Class III subfamily.

The protein localises to the cell membrane. The catalysed reaction is [(1-&gt;4)-N-acetyl-beta-D-glucosaminyl](n) + UDP-N-acetyl-alpha-D-glucosamine = [(1-&gt;4)-N-acetyl-beta-D-glucosaminyl](n+1) + UDP + H(+). In terms of biological role, polymerizes chitin, a structural polymer of the cell wall and septum, by transferring the sugar moiety of UDP-GlcNAc to the non-reducing end of the growing chitin polymer. Plays an important role in septal growth or maintenance. Mediates colony spore formation. In Aspergillus niger (strain ATCC MYA-4892 / CBS 513.88 / FGSC A1513), this protein is Chitin synthase B.